A 303-amino-acid chain; its full sequence is 3-methyl-2-oxobutanoate hydroxymethyltransferase (303 aa).

A compositionally biased stretch (polar residues) spans 1–10; sequence MDSSGTVRNQ. The segment at 1–41 is disordered; the sequence is MDSSGTVRNQTSDDHSRPADAAGTAATLYGAPAETRSPRRS. Mg(2+) is bound by residues Asp84 and Asp123. Residues 84–85, Asp123, and Lys153 each bind 3-methyl-2-oxobutanoate; that span reads DS. Glu155 is a binding site for Mg(2+). Residue Glu221 is the Proton acceptor of the active site.

It belongs to the PanB family. As to quaternary structure, homodecamer; pentamer of dimers. It depends on Mg(2+) as a cofactor.

Its subcellular location is the cytoplasm. The catalysed reaction is 3-methyl-2-oxobutanoate + (6R)-5,10-methylene-5,6,7,8-tetrahydrofolate + H2O = 2-dehydropantoate + (6S)-5,6,7,8-tetrahydrofolate. It participates in cofactor biosynthesis; (R)-pantothenate biosynthesis; (R)-pantoate from 3-methyl-2-oxobutanoate: step 1/2. Catalyzes the reversible reaction in which hydroxymethyl group from 5,10-methylenetetrahydrofolate is transferred onto alpha-ketoisovalerate to form ketopantoate. The polypeptide is 3-methyl-2-oxobutanoate hydroxymethyltransferase (Frankia alni (strain DSM 45986 / CECT 9034 / ACN14a)).